We begin with the raw amino-acid sequence, 508 residues long: Photosystem II CP47 reaction center protein (508 aa).

Transmembrane regions (helical) follow at residues 21-36 (AVHIMHTALVSGWAGS), 101-115 (IVFSGLCFLAAIWHW), 140-156 (GIHLFLAGVACFGFGAF), 203-218 (IAAGTLGILAGLFHLS), 237-252 (VLSSSIAAVFFAAFVV), and 457-472 (TFALLFFFGHIWHGAR).

It belongs to the PsbB/PsbC family. PsbB subfamily. As to quaternary structure, PSII is composed of 1 copy each of membrane proteins PsbA, PsbB, PsbC, PsbD, PsbE, PsbF, PsbH, PsbI, PsbJ, PsbK, PsbL, PsbM, PsbT, PsbX, PsbY, PsbZ, Psb30/Ycf12, at least 3 peripheral proteins of the oxygen-evolving complex and a large number of cofactors. It forms dimeric complexes. It depends on Binds multiple chlorophylls. PSII binds additional chlorophylls, carotenoids and specific lipids. as a cofactor.

The protein resides in the plastid. The protein localises to the chloroplast thylakoid membrane. Its function is as follows. One of the components of the core complex of photosystem II (PSII). It binds chlorophyll and helps catalyze the primary light-induced photochemical processes of PSII. PSII is a light-driven water:plastoquinone oxidoreductase, using light energy to abstract electrons from H(2)O, generating O(2) and a proton gradient subsequently used for ATP formation. The polypeptide is Photosystem II CP47 reaction center protein (Agrostis stolonifera (Creeping bentgrass)).